A 633-amino-acid chain; its full sequence is MMVMTDKFNYEELGLKVGLEIHRQLDTKKLFSPVPSELSDKVEFTFQRRLRPTMSELGEIDPAALEEFKKGRVYVYEGNYELTDLVYMDEEPPRGPDREALEVALQIAYLLNAKPVDEVYYMRKIVIDGSNVSGFQRTAIIATDGKVETPWGAVGIPTICLEEDAARIIERKDKEVIYRLDRLGIPLIEISTTPDIHHPEQAKVVAKFIGDALRATKKVKRGLGTIRQDLNVSIKGGARIEIKGVQELDMIPIIIEREVERQLNLLKIRDELRKRGVKPKDIKEEFYDVTDIFENTKSKIIARVIKKGGKVLAIKLPKFRGLIGREIQPGRRLGTEFADRAKKYVPGIFHIDELPNYGISQEEVNKVIERLNLSEEDAFVLVAAEEEKAKNALREVIKRAREAIEGVPEETRRALPDGNTEYMRPLPGKARMYPETDIPPLRIPDDLKKKIKENLPELPQAKVERYVKEYKLDRSLAQTLVDDERDELFEELVSMGVKPSLAASILVVVLKGLRKEVPIENVTDEHIREAFQLYLEGKIAKEAFEEIFKELARNPSKSAREVAEEKGLTLLSEEEVTRIIEEVIQQNIEVVKAKGMGAMGLIMGRVMAKVRGKADGKLVSQIVRRKLQEISGG.

The interval 414–437 (ALPDGNTEYMRPLPGKARMYPETD) is disordered.

This sequence belongs to the GatB/GatE family. GatE subfamily. In terms of assembly, heterodimer of GatD and GatE.

The catalysed reaction is L-glutamyl-tRNA(Gln) + L-glutamine + ATP + H2O = L-glutaminyl-tRNA(Gln) + L-glutamate + ADP + phosphate + H(+). In terms of biological role, allows the formation of correctly charged Gln-tRNA(Gln) through the transamidation of misacylated Glu-tRNA(Gln) in organisms which lack glutaminyl-tRNA synthetase. The reaction takes place in the presence of glutamine and ATP through an activated gamma-phospho-Glu-tRNA(Gln). The GatDE system is specific for glutamate and does not act on aspartate. In Pyrococcus abyssi (strain GE5 / Orsay), this protein is Glutamyl-tRNA(Gln) amidotransferase subunit E.